Consider the following 163-residue polypeptide: Peptidyl-prolyl cis-trans isomerase-like 1 (163 aa).

In terms of domain architecture, PPIase cyclophilin-type spans 1-155 (MATDVAVETT…TEVKIVKARV (155 aa)).

Belongs to the cyclophilin-type PPIase family. PPIL1 subfamily.

It catalyses the reaction [protein]-peptidylproline (omega=180) = [protein]-peptidylproline (omega=0). In terms of biological role, PPIases accelerate the folding of proteins. It catalyzes the cis-trans isomerization of proline imidic peptide bonds in oligopeptides. The sequence is that of Peptidyl-prolyl cis-trans isomerase-like 1 (ppi-1) from Neurospora crassa (strain ATCC 24698 / 74-OR23-1A / CBS 708.71 / DSM 1257 / FGSC 987).